Consider the following 131-residue polypeptide: (R)-mandelonitrile lyase (131 aa).

Residues 42–104 (VTFEPGARTA…WHGAAPTTAM (63 aa)) form the Cupin type-2 domain. His53, His55, Gln59, His94, and His96 together coordinate Mn(2+).

It belongs to the cupin domain-containing hydroxynitrile lyase family. It depends on Mn(2+) as a cofactor.

It catalyses the reaction (R)-mandelonitrile = benzaldehyde + hydrogen cyanide. In terms of biological role, hydroxynitrile lyase which catalyzes mandelonitrile formation from benzaldehyde and hydrogen cyanide with high stereoselectivity in presence of manganese. This chain is (R)-mandelonitrile lyase, found in Granulicella tundricola (strain ATCC BAA-1859 / DSM 23138 / MP5ACTX9).